The sequence spans 563 residues: Tripeptidyl-peptidase 1 (563 aa).

The first 19 residues, 1–19 (MGLQACLLGLFALILSGKC), serve as a signal peptide directing secretion. Residues 20–195 (SYSPEPDQRR…PEPQVTGTVG (176 aa)) constitute a propeptide, removed in mature form. Cysteines 111 and 122 form a disulfide. Residues 199–563 (GVTPSVIRKR…PALLKTLLNP (365 aa)) enclose the Peptidase S53 domain. N-linked (GlcNAc...) asparagine glycans are attached at residues N210 and N222. Residues E272 and D276 each act as charge relay system in the active site. N286, N313, and N443 each carry an N-linked (GlcNAc...) asparagine glycan. Disulfide bonds link C365/C526 and C522/C537. S475 acts as the Charge relay system in catalysis. 2 residues coordinate Ca(2+): D517 and V518. Positions 539, 541, and 543 each coordinate Ca(2+).

As to quaternary structure, monomer. Interacts with CLN5. Interacts with CLN3. Requires Ca(2+) as cofactor. Activated by autocatalytic proteolytical processing upon acidification. N-glycosylation is required for processing and activity. Detected in all tissues examined with highest levels in heart and placenta and relatively similar levels in other tissues.

Its subcellular location is the lysosome. The protein localises to the melanosome. The catalysed reaction is Release of an N-terminal tripeptide from a polypeptide, but also has endopeptidase activity.. Inhibited by diisopropyl fluorophosphate (DFP). Functionally, lysosomal serine protease with tripeptidyl-peptidase I activity. May act as a non-specific lysosomal peptidase which generates tripeptides from the breakdown products produced by lysosomal proteinases. Requires substrates with an unsubstituted N-terminus. The sequence is that of Tripeptidyl-peptidase 1 (TPP1) from Homo sapiens (Human).